The chain runs to 495 residues: WD repeat-containing protein 37 (495 aa).

Composition is skewed to polar residues over residues 1–13 and 22–31; these read MPTE…TARQ and SLSIRRTNSS. Residues 1–50 are disordered; sequence MPTESASCSTARQTKQKRKSHSLSIRRTNSSEQERTGLPRDMLEGQDSKL. Basic and acidic residues predominate over residues 32-47; it reads EQERTGLPRDMLEGQD. 2 WD repeats span residues 154-194 and 197-236; these read GHRD…CLVK and GHVG…PTPQ. The tract at residues 237-266 is disordered; it reads PVADTSQISGEDEVECSDKDEPDLDGDVSS. Residues 246 to 264 show a composition bias toward acidic residues; it reads GEDEVECSDKDEPDLDGDV. WD repeat units lie at residues 280–319, 322–361, 366–404, 407–446, and 453–494; these read SHQG…LVHS, GHDQ…IHSV, GHTD…SPIA, RTDS…LARL, and GHRR…LLQE.

In terms of assembly, forms homodimers. Interacts with PACS1. Interacts with PACS2.

The protein resides in the cytoplasm. It is found in the nucleus. Its function is as follows. Required for normal ER Ca2+ handling in lymphocytes. Together with PACS1, it plays an essential role in stabilizing peripheral lymphocyte populations. The sequence is that of WD repeat-containing protein 37 (WDR37) from Pongo abelii (Sumatran orangutan).